We begin with the raw amino-acid sequence, 79 residues long: Acyl carrier protein (79 aa).

A Carrier domain is found at 4–79 (EQILVDVQEA…DVVAYIETKL (76 aa)). S39 is modified (O-(pantetheine 4'-phosphoryl)serine).

The protein belongs to the acyl carrier protein (ACP) family. In terms of processing, 4'-phosphopantetheine is transferred from CoA to a specific serine of apo-ACP by AcpS. This modification is essential for activity because fatty acids are bound in thioester linkage to the sulfhydryl of the prosthetic group.

The protein resides in the cytoplasm. Its pathway is lipid metabolism; fatty acid biosynthesis. Its function is as follows. Carrier of the growing fatty acid chain in fatty acid biosynthesis. This Exiguobacterium sp. (strain ATCC BAA-1283 / AT1b) protein is Acyl carrier protein.